A 377-amino-acid chain; its full sequence is Sodium-dependent organic anion transporter (377 aa).

Residues 1–29 lie on the Extracellular side of the membrane; sequence MRANCSSSSACPANSSEEELPVGLEVHGN. A glycan (N-linked (GlcNAc...) asparagine) is linked at N4. Residues 30 to 50 traverse the membrane as a helical segment; the sequence is LELVFTVVSTVMMGLLMFSLG. The Cytoplasmic portion of the chain corresponds to 51–67; that stretch reads CSVEIRKLWSHIRRPWG. Residues 68–88 form a helical membrane-spanning segment; it reads IAVGLLCQFGLMPFTAYLLAI. At 89–97 the chain is on the extracellular side; sequence SFSLKPVQA. Residues 98 to 118 form a helical membrane-spanning segment; it reads IAVLIMGCCPGGTISNIFTFW. Topologically, residues 119–133 are cytoplasmic; that stretch reads VDGDMDLSISMTTCS. The helical transmembrane segment at 134–154 threads the bilayer; that stretch reads TVAALGMMPLCIYLYTWSWSL. The Extracellular portion of the chain corresponds to 155-159; it reads QQNLT. A glycan (N-linked (GlcNAc...) asparagine) is linked at N157. The helical transmembrane segment at 160–180 threads the bilayer; sequence IPYQNIGITLVCLTIPVAFGV. Residues 181 to 195 are Cytoplasmic-facing; that stretch reads YVNYRWPKQSKIILK. Residues 196 to 216 traverse the membrane as a helical segment; the sequence is IGAVVGGVLLLVVAVAGVVLA. At 217–226 the chain is on the extracellular side; the sequence is KGSWNSDITL. A helical transmembrane segment spans residues 227 to 247; sequence LTISFIFPLIGHVTGFLLALF. Residues 248–266 lie on the Cytoplasmic side of the membrane; that stretch reads THQSWQRCRTISLETGAQN. A helical membrane pass occupies residues 267–285; the sequence is IQMCITMLQLSFTAEHLVQ. Residues 286 to 290 are Extracellular-facing; it reads MLSFP. The helical transmembrane segment at 291 to 311 threads the bilayer; the sequence is LAYGLFQLIDGFLIVAAYQTY. At 312 to 377 the chain is on the cytoplasmic side; it reads KRRLKNKHGK…EPVGHITSCE (66 aa).

This sequence belongs to the bile acid:sodium symporter (BASS) (TC 2.A.28) family. In terms of processing, glycosylated. In terms of tissue distribution, highly expressed in testis, placenta and pancreas. Moderately expressed in heart, lung and mammary gland. Weakly expressed in brain, colon, kidney, liver, ovary, prostate, small intestine, spleen and thymus.

It is found in the membrane. The catalysed reaction is estrone 3-sulfate(out) + 2 Na(+)(out) = estrone 3-sulfate(in) + 2 Na(+)(in). The enzyme catalyses 17beta-estradiol 3-sulfate(out) + 2 Na(+)(out) = 17beta-estradiol 3-sulfate(in) + 2 Na(+)(in). It catalyses the reaction dehydroepiandrosterone 3-sulfate(out) + 2 Na(+)(out) = dehydroepiandrosterone 3-sulfate(in) + 2 Na(+)(in). It carries out the reaction androst-5-ene-diol 3-sulfate(out) + 2 Na(+)(out) = androst-5-ene-diol 3-sulfate(in) + 2 Na(+)(in). The catalysed reaction is pregnenolone sulfate(out) + 2 Na(+)(out) = pregnenolone sulfate(in) + 2 Na(+)(in). The enzyme catalyses taurolithocholate 3-sulfate(out) + 2 Na(+)(out) = taurolithocholate 3-sulfate(in) + 2 Na(+)(in). It catalyses the reaction androsterone 3alpha-sulfate(out) + 2 Na(+)(out) = androsterone 3alpha-sulfate(in) + 2 Na(+)(in). It carries out the reaction 5alpha-dihydrotestosterone sulfate(out) + 2 Na(+)(out) = 5alpha-dihydrotestosterone sulfate(in) + 2 Na(+)(in). The catalysed reaction is 17beta-estradiol 17-sulfate(out) + 2 Na(+)(out) = 17beta-estradiol 17-sulfate(in) + 2 Na(+)(in). The enzyme catalyses 17alpha-hydroxypregnenolone 3-sulfate(out) + 2 Na(+)(out) = 17alpha-hydroxypregnenolone 3-sulfate(in) + 2 Na(+)(in). It catalyses the reaction epiandrosterone 3-sulfate(out) + 2 Na(+)(out) = epiandrosterone 3-sulfate(in) + 2 Na(+)(in). It carries out the reaction epitestosterone 17-sulfate(out) + 2 Na(+)(out) = epitestosterone 17-sulfate(in) + 2 Na(+)(in). The catalysed reaction is testosterone 17-sulfate(out) + 2 Na(+)(out) = testosterone 17-sulfate(in) + 2 Na(+)(in). The enzyme catalyses 16alpha-hydroxydehydroepiandrosterone 3-sulfate(out) + 2 Na(+)(out) = 16alpha-hydroxydehydroepiandrosterone 3-sulfate(in) + 2 Na(+)(in). In terms of biological role, transports sulfoconjugated steroid hormones from the extracellular compartment into the cytosol in a sodium-dependent manner without hydrolysis. Steroid sulfate hormones are commonly considered to be biologically inactive metabolites, that may be activated by steroid sulfatases into free steroids. May play an important role by delivering sulfoconjugated steroids to specific target cells in reproductive organs. May play a role transporting the estriol precursor 16alpha-hydroxydehydroepiandrosterone 3-sulfate (16a-OH-DHEAS) at the fetal blood vessel endothelium. Can also transport other sulfoconjugated molecules such as taurolithocholic acid-3-sulfate and sulfoconjugated pyrenes. The protein is Sodium-dependent organic anion transporter (SLC10A6) of Homo sapiens (Human).